We begin with the raw amino-acid sequence, 398 residues long: tRNA-specific 2-thiouridylase MnmA (398 aa).

Residues 20-27 and Leu46 contribute to the ATP site; that span reads AMSGGVDS. Cys114 acts as the Nucleophile in catalysis. Residues Cys114 and Cys210 are joined by a disulfide bond. Residue Gly138 coordinates ATP. An interaction with tRNA region spans residues 160 to 162; that stretch reads RDQ. Cys210 (cysteine persulfide intermediate) is an active-site residue.

The protein belongs to the MnmA/TRMU family.

Its subcellular location is the cytoplasm. The catalysed reaction is S-sulfanyl-L-cysteinyl-[protein] + uridine(34) in tRNA + AH2 + ATP = 2-thiouridine(34) in tRNA + L-cysteinyl-[protein] + A + AMP + diphosphate + H(+). Functionally, catalyzes the 2-thiolation of uridine at the wobble position (U34) of tRNA, leading to the formation of s(2)U34. In Brucella abortus (strain S19), this protein is tRNA-specific 2-thiouridylase MnmA.